The chain runs to 250 residues: 3-deoxy-manno-octulosonate cytidylyltransferase (250 aa).

The protein belongs to the KdsB family.

Its subcellular location is the cytoplasm. It catalyses the reaction 3-deoxy-alpha-D-manno-oct-2-ulosonate + CTP = CMP-3-deoxy-beta-D-manno-octulosonate + diphosphate. The protein operates within nucleotide-sugar biosynthesis; CMP-3-deoxy-D-manno-octulosonate biosynthesis; CMP-3-deoxy-D-manno-octulosonate from 3-deoxy-D-manno-octulosonate and CTP: step 1/1. It functions in the pathway bacterial outer membrane biogenesis; lipopolysaccharide biosynthesis. Its function is as follows. Activates KDO (a required 8-carbon sugar) for incorporation into bacterial lipopolysaccharide in Gram-negative bacteria. In Syntrophotalea carbinolica (strain DSM 2380 / NBRC 103641 / GraBd1) (Pelobacter carbinolicus), this protein is 3-deoxy-manno-octulosonate cytidylyltransferase.